A 200-amino-acid polypeptide reads, in one-letter code: Type 1 fimbriae regulatory protein FimB (200 aa).

In terms of domain architecture, Tyr recombinase spans 8–189 (KKRNFLTHSE…NAGRFYGIWD (182 aa)). Residues Arg-47, Lys-72, His-141, Arg-144, and His-167 contribute to the active site. The active-site O-(3'-phospho-DNA)-tyrosine intermediate is Tyr-176.

This sequence belongs to the 'phage' integrase family.

Functionally, fimB is one of the 2 regulatory proteins which control the phase variation of type 1 fimbriae in E.coli. These proteins mediate the periodic inversion of a 300bp DNA segment that harbors the promoter for the fimbrial structural gene, fimA. FimB switches fimA on. This Escherichia coli O157:H7 protein is Type 1 fimbriae regulatory protein FimB (fimB).